A 232-amino-acid chain; its full sequence is Flavin-dependent thymidylate synthase (232 aa).

In terms of domain architecture, ThyX spans 1-204 (MKIALLQHTP…PTIFRDAGPG (204 aa)). FAD is bound by residues Ser55, 79–81 (RHR), and Gln87. Residues 76–79 (QLVR), 87–91 (QQSQR), and Arg143 contribute to the dUMP site. A ThyX motif motif is present at residues 79–89 (RHRIASYSQQS). FAD contacts are provided by residues 159–161 (NAR) and His165. Arg170 is a binding site for dUMP. Residue Arg170 is the Involved in ionization of N3 of dUMP, leading to its activation of the active site.

This sequence belongs to the thymidylate synthase ThyX family. Homotetramer. The cofactor is FAD.

It carries out the reaction dUMP + (6R)-5,10-methylene-5,6,7,8-tetrahydrofolate + NADPH + H(+) = dTMP + (6S)-5,6,7,8-tetrahydrofolate + NADP(+). The protein operates within pyrimidine metabolism; dTTP biosynthesis. Functionally, catalyzes the reductive methylation of 2'-deoxyuridine-5'-monophosphate (dUMP) to 2'-deoxythymidine-5'-monophosphate (dTMP) while utilizing 5,10-methylenetetrahydrofolate (mTHF) as the methyl donor, and NADPH and FADH(2) as the reductant. This chain is Flavin-dependent thymidylate synthase, found in Geobacter sulfurreducens (strain ATCC 51573 / DSM 12127 / PCA).